A 53-amino-acid chain; its full sequence is ATP synthase protein 8 (53 aa).

A helical membrane pass occupies residues 4-24; sequence MAPISWLLLFIVFSITFILFC.

The protein belongs to the ATPase protein 8 family. As to quaternary structure, F-type ATPases have 2 components, CF(1) - the catalytic core - and CF(0) - the membrane proton channel.

The protein resides in the mitochondrion membrane. In terms of biological role, mitochondrial membrane ATP synthase (F(1)F(0) ATP synthase or Complex V) produces ATP from ADP in the presence of a proton gradient across the membrane which is generated by electron transport complexes of the respiratory chain. F-type ATPases consist of two structural domains, F(1) - containing the extramembraneous catalytic core and F(0) - containing the membrane proton channel, linked together by a central stalk and a peripheral stalk. During catalysis, ATP synthesis in the catalytic domain of F(1) is coupled via a rotary mechanism of the central stalk subunits to proton translocation. Part of the complex F(0) domain. Minor subunit located with subunit a in the membrane. In Drosophila yakuba (Fruit fly), this protein is ATP synthase protein 8 (mt:ATPase8).